The chain runs to 536 residues: Phosphoenolpyruvate carboxykinase (ATP) (536 aa).

The substrate site is built by Arg63, Tyr203, and Lys209. Residues Lys209, His228, and 244–252 (GLSGTGKTT) each bind ATP. Residues Lys209 and His228 each contribute to the Mn(2+) site. Asp265 is a Mn(2+) binding site. ATP-binding positions include Glu293, Arg329, 445–446 (RI), and Thr451. Arg329 provides a ligand contact to substrate.

It belongs to the phosphoenolpyruvate carboxykinase (ATP) family. Monomer. Mn(2+) serves as cofactor.

The protein resides in the cytoplasm. It carries out the reaction oxaloacetate + ATP = phosphoenolpyruvate + ADP + CO2. The protein operates within carbohydrate biosynthesis; gluconeogenesis. In terms of biological role, involved in the gluconeogenesis. Catalyzes the conversion of oxaloacetate (OAA) to phosphoenolpyruvate (PEP) through direct phosphoryl transfer between the nucleoside triphosphate and OAA. In Colwellia psychrerythraea (strain 34H / ATCC BAA-681) (Vibrio psychroerythus), this protein is Phosphoenolpyruvate carboxykinase (ATP).